Consider the following 148-residue polypeptide: 3-hydroxyacyl-[acyl-carrier-protein] dehydratase FabZ (148 aa).

Histidine 48 is a catalytic residue.

It belongs to the thioester dehydratase family. FabZ subfamily.

It localises to the cytoplasm. The enzyme catalyses a (3R)-hydroxyacyl-[ACP] = a (2E)-enoyl-[ACP] + H2O. Its function is as follows. Involved in unsaturated fatty acids biosynthesis. Catalyzes the dehydration of short chain beta-hydroxyacyl-ACPs and long chain saturated and unsaturated beta-hydroxyacyl-ACPs. This is 3-hydroxyacyl-[acyl-carrier-protein] dehydratase FabZ from Campylobacter curvus (strain 525.92).